We begin with the raw amino-acid sequence, 145 residues long: MLMPKRVKYRREHRGKMRGRAKGGTEVHFGEFGLQALEASWITNRQIEAARIAMTRYMKRGGKVWIKIFPSKPYTAKPLEVRMGSGKGAPEGWVAVVKPGKIMFEISGVSEEVAREALRLASHKLPIKCKFVKREEVGGDSNESN.

This sequence belongs to the universal ribosomal protein uL16 family. As to quaternary structure, part of the 50S ribosomal subunit.

Binds 23S rRNA and is also seen to make contacts with the A and possibly P site tRNAs. This Shouchella clausii (strain KSM-K16) (Alkalihalobacillus clausii) protein is Large ribosomal subunit protein uL16.